Reading from the N-terminus, the 122-residue chain is UPF0102 protein CA_C1763 (122 aa).

The protein belongs to the UPF0102 family.

The protein is UPF0102 protein CA_C1763 of Clostridium acetobutylicum (strain ATCC 824 / DSM 792 / JCM 1419 / IAM 19013 / LMG 5710 / NBRC 13948 / NRRL B-527 / VKM B-1787 / 2291 / W).